The following is a 94-amino-acid chain: Large ribosomal subunit protein eL43B (94 aa).

The C4-type zinc-finger motif lies at 39–62 (CPFCGRLTVKRTAAGIWKCSGKGC).

The protein belongs to the eukaryotic ribosomal protein eL43 family. As to quaternary structure, component of the large ribosomal subunit (LSU). Mature yeast ribosomes consist of a small (40S) and a large (60S) subunit. The 40S small subunit contains 1 molecule of ribosomal RNA (18S rRNA) and at least 33 different proteins. The large 60S subunit contains 3 rRNA molecules (25S, 5.8S and 5S rRNA) and at least 46 different proteins.

It is found in the cytoplasm. Component of the ribosome, a large ribonucleoprotein complex responsible for the synthesis of proteins in the cell. The small ribosomal subunit (SSU) binds messenger RNAs (mRNAs) and translates the encoded message by selecting cognate aminoacyl-transfer RNA (tRNA) molecules. The large subunit (LSU) contains the ribosomal catalytic site termed the peptidyl transferase center (PTC), which catalyzes the formation of peptide bonds, thereby polymerizing the amino acids delivered by tRNAs into a polypeptide chain. The nascent polypeptides leave the ribosome through a tunnel in the LSU and interact with protein factors that function in enzymatic processing, targeting, and the membrane insertion of nascent chains at the exit of the ribosomal tunnel. This chain is Large ribosomal subunit protein eL43B (rpl4302), found in Schizosaccharomyces pombe (strain 972 / ATCC 24843) (Fission yeast).